Reading from the N-terminus, the 155-residue chain is Large ribosomal subunit protein uL15 (155 aa).

A compositionally biased stretch (basic residues) spans 1-16; it reads MVRRFKRAVKYRRGSR. Residues 1-35 are disordered; it reads MVRRFKRAVKYRRGSRTHGWGRVGQHRKSGGSGGK.

It belongs to the universal ribosomal protein uL15 family. As to quaternary structure, part of the 50S ribosomal subunit.

Binds to the 23S rRNA. The sequence is that of Large ribosomal subunit protein uL15 from Pyrobaculum arsenaticum (strain DSM 13514 / JCM 11321 / PZ6).